Reading from the N-terminus, the 469-residue chain is GTPase Der (469 aa).

EngA-type G domains are found at residues 3–167 (PTLV…PEEE) and 176–349 (PKIA…AAAF). Residues 9-16 (GRPNVGKS), 56-60 (DTGGL), 119-122 (NKAE), 182-189 (GRPNVGKS), 229-233 (DTAGV), and 294-297 (NKWD) each bind GTP. Positions 350-436 (IKLSTPKLTR…RIQIKEDEGK (87 aa)) constitute a KH-like domain. A compositionally biased stretch (basic and acidic residues) spans 432 to 443 (EDEGKNPFEGKK). The segment at 432 to 469 (EDEGKNPFEGKKRAPLSESEATRMRRKKRVRRKVYGAD) is disordered. The span at 455-469 (MRRKKRVRRKVYGAD) shows a compositional bias: basic residues.

The protein belongs to the TRAFAC class TrmE-Era-EngA-EngB-Septin-like GTPase superfamily. EngA (Der) GTPase family. As to quaternary structure, associates with the 50S ribosomal subunit.

GTPase that plays an essential role in the late steps of ribosome biogenesis. This is GTPase Der from Thiobacillus denitrificans (strain ATCC 25259 / T1).